The sequence spans 353 residues: 3-ketosteroid-9-alpha-monooxygenase, ferredoxin reductase component (353 aa).

One can recognise an FAD-binding FR-type domain in the interval 8–117 (SHVLELQVAE…LAPSGTFVPK (110 aa)). One can recognise a 2Fe-2S ferredoxin-type domain in the interval 264–353 (ATAVVTLDGT…SDSVEVTYDE (90 aa)). [2Fe-2S] cluster is bound by residues cysteine 300, cysteine 305, cysteine 308, and cysteine 338.

In terms of assembly, monomer. The two-component system 3-ketosteroid-9-alpha-monooxygenase is composed of an oxygenase component KshA and a reductase component KshB. It depends on FAD as a cofactor. [2Fe-2S] cluster serves as cofactor.

It catalyses the reaction androsta-1,4-diene-3,17-dione + 2 reduced [2Fe-2S]-[ferredoxin] + O2 + 2 H(+) = 9alpha-hydroxyandrosta-1,4-diene-3,17-dione + 2 oxidized [2Fe-2S]-[ferredoxin] + H2O. The protein operates within lipid metabolism; steroid biosynthesis. In terms of biological role, involved in the degradation of cholesterol. Catalyzes the introduction of a 9a-hydroxyl moiety into 1,4-androstadiene-3,17-dione (ADD) to yield the 9alpha-hydroxy-1,4-androstadiene-3,17-dione (9OHADD) intermediate which spontaneously form 3-hydroxy-9,10-seconandrost-1,3,5(10)-triene-9,17-dione (HSA) via the meta-cleavage of ring B with concomitant aromatization of ring A. The sequence is that of 3-ketosteroid-9-alpha-monooxygenase, ferredoxin reductase component (kshB) from Mycolicibacterium smegmatis (strain ATCC 700084 / mc(2)155) (Mycobacterium smegmatis).